We begin with the raw amino-acid sequence, 424 residues long: Glutamyl-tRNA reductase (424 aa).

Substrate is bound by residues 49-52 (TCNR), S105, 110-112 (EPQ), and Q116. The active-site Nucleophile is C50. 185-190 (GSGETA) is an NADP(+) binding site.

This sequence belongs to the glutamyl-tRNA reductase family. As to quaternary structure, homodimer.

It catalyses the reaction (S)-4-amino-5-oxopentanoate + tRNA(Glu) + NADP(+) = L-glutamyl-tRNA(Glu) + NADPH + H(+). It participates in porphyrin-containing compound metabolism; protoporphyrin-IX biosynthesis; 5-aminolevulinate from L-glutamyl-tRNA(Glu): step 1/2. Catalyzes the NADPH-dependent reduction of glutamyl-tRNA(Glu) to glutamate 1-semialdehyde (GSA). The chain is Glutamyl-tRNA reductase from Legionella pneumophila (strain Corby).